Reading from the N-terminus, the 244-residue chain is tRNA (guanine-N(1)-)-methyltransferase (244 aa).

Residues glycine 120 and isoleucine 140–leucine 145 each bind S-adenosyl-L-methionine.

Belongs to the RNA methyltransferase TrmD family. In terms of assembly, homodimer.

The protein resides in the cytoplasm. The catalysed reaction is guanosine(37) in tRNA + S-adenosyl-L-methionine = N(1)-methylguanosine(37) in tRNA + S-adenosyl-L-homocysteine + H(+). Functionally, specifically methylates guanosine-37 in various tRNAs. The polypeptide is tRNA (guanine-N(1)-)-methyltransferase (Brucella canis (strain ATCC 23365 / NCTC 10854 / RM-666)).